The following is a 289-amino-acid chain: ATP synthase gamma chain (289 aa).

Belongs to the ATPase gamma chain family. As to quaternary structure, F-type ATPases have 2 components, CF(1) - the catalytic core - and CF(0) - the membrane proton channel. CF(1) has five subunits: alpha(3), beta(3), gamma(1), delta(1), epsilon(1). CF(0) has three main subunits: a, b and c.

The protein resides in the cell inner membrane. Its function is as follows. Produces ATP from ADP in the presence of a proton gradient across the membrane. The gamma chain is believed to be important in regulating ATPase activity and the flow of protons through the CF(0) complex. This chain is ATP synthase gamma chain, found in Herminiimonas arsenicoxydans.